A 151-amino-acid polypeptide reads, in one-letter code: Monooxygenase nsrQ (151 aa).

This sequence belongs to the avfA family.

The protein operates within secondary metabolite biosynthesis. Its function is as follows. Monooxygenase; part of the gene cluster that mediates the biosynthesis of the tetrahydroxanthone dimer neosartorin, which exhibits antibacterial activity. The two different monomeric units appear to be synthesized by the same set of enzymes, among which the Baeyer-Villiger monooxygenase nsrF is the key enzyme for the divergence of the biosynthetic routes. The pathway begins with the synthesis of atrochrysone thioester by the polyketide synthase nsrB. The atrochrysone carboxyl ACP thioesterase nsrC then breaks the thioester bond and releases the atrochrysone carboxylic acid from AacuL. Atrochrysone carboxylic acid is decarboxylated by the decarboxylase nsrE, and oxidized by the anthrone oxygenase nsrD to yield emodin. Emodin is then reduced to emodin hydroquinone by the oxidoreductase nsrR. A-ring reduction by the short chain dehydrogenase nsrJ, dehydration by the scytalone dehydratase-like protein nsrI and probable spontaneous re-oxidation, results in overall deoxygenation to chrysophanol. The Baeyer-Villiger monooxygenase nsrF accepts chrysophanol as a substrate to insert one oxygen atom at two different positions to yield the precursors of both monomric units. NsrF is promiscuous/flexible in interacting with the 2 (non methylated and methylated) aromatic rings of chrysophanol, thus diverging the biosynthetic pathway at this point. After the hydrolysis of the lactones, methylesterification by the methyltransferase nsrG yields respectively moniliphenone and 2,2',6'-trihydroxy-4-methyl-6-methoxya-cyldiphenylmethanone. The next steps are the hydroxylation by the FAD-dependent monooxygenase nsrK, followed by isomerization by the monooxygenase nsrQ. The short chain dehydrogenase/reductase nsrO then catalyzes the C-5 ketoreduction to give the xanthone skeleton of blennolide C and 5-acetylblennolide A. The acetyltransferase nsrL has a strict substrate specificity and uses only blennolide A but not blennolide C to yield 5-acetylblennolide A as the single-acetylated product. In the final step of the biosynthesis, the heterodimerization of the 2 xanthones, blennolide C and 5-acetylblennolide A, is catalyzed by the cytochrome P450 monooxygenase nsrP. NsrP can utilize at least three different xanthones as its substrates to perform the dimerization reaction. The polypeptide is Monooxygenase nsrQ (Aspergillus novofumigatus (strain IBT 16806)).